Here is a 270-residue protein sequence, read N- to C-terminus: MDRYGVFGNPIGHSKSPQIHALFAAQTGQALSYEPLLAPLDDFPAFARDFFREGRGANVTVPFKEQAYRMADELTERARRAGAVNTLKKLEDGRLLGDNTDGAGLVADLLNAGVTLSGRRILLLGAGGAVRGVLEPLLAHRPAALVIANRTASRAEQLVQEFAELGPLSASGFAELAEPVDLIVNGTSASLGGELPPLADSLIVAGRTFCYDMMYSAEPTPFCRWAAALGATTRDGLGMLVEQAAEAFELWRGVRPDTAPVLAELRRQLG.

Shikimate-binding positions include Ser-14 to Ser-16 and Thr-60. Lys-64 (proton acceptor) is an active-site residue. Glu-76 provides a ligand contact to NADP(+). Positions 85 and 101 each coordinate shikimate. NADP(+)-binding positions include Gly-125–Ala-129, Asn-149–Arg-154, and Met-213. Residue Tyr-215 participates in shikimate binding. Gly-236 is a binding site for NADP(+).

Belongs to the shikimate dehydrogenase family. Homodimer.

The enzyme catalyses shikimate + NADP(+) = 3-dehydroshikimate + NADPH + H(+). The protein operates within metabolic intermediate biosynthesis; chorismate biosynthesis; chorismate from D-erythrose 4-phosphate and phosphoenolpyruvate: step 4/7. In terms of biological role, involved in the biosynthesis of the chorismate, which leads to the biosynthesis of aromatic amino acids. Catalyzes the reversible NADPH linked reduction of 3-dehydroshikimate (DHSA) to yield shikimate (SA). In Stutzerimonas stutzeri (strain A1501) (Pseudomonas stutzeri), this protein is Shikimate dehydrogenase (NADP(+)).